A 968-amino-acid chain; its full sequence is Sorting nexin-13 (968 aa).

Residues 97–284 (ANIIDEPLQQ…YVIWMIRDSN (188 aa)) enclose the PXA domain. The 124-residue stretch at 373–496 (PLDSILVDNV…RKVYELMLRD (124 aa)) folds into the RGS domain. The PX domain occupies 570–691 (YADYDPYAVA…DFLENKAYSK (122 aa)). Residues Arg612, Ser614, Lys639, and Arg653 each coordinate a 1,2-diacyl-sn-glycero-3-phospho-(1D-myo-inositol-3-phosphate).

This sequence belongs to the sorting nexin family.

The protein localises to the early endosome membrane. Functionally, may be involved in several stages of intracellular trafficking. May play a role in endosome homeostasis. Acts as a GAP for Galphas. In Homo sapiens (Human), this protein is Sorting nexin-13 (SNX13).